A 590-amino-acid polypeptide reads, in one-letter code: Aspartate--tRNA(Asp/Asn) ligase (590 aa).

Glutamate 182 contributes to the L-aspartate binding site. Residues 206-209 (QLFK) are aspartate. Arginine 228 provides a ligand contact to L-aspartate. Residues 228-230 (RDE) and glutamine 237 contribute to the ATP site. Histidine 454 contributes to the L-aspartate binding site. Glutamate 488 serves as a coordination point for ATP. Arginine 495 contributes to the L-aspartate binding site. 540-543 (GLDR) provides a ligand contact to ATP.

It belongs to the class-II aminoacyl-tRNA synthetase family. Type 1 subfamily. Homodimer.

The protein resides in the cytoplasm. The enzyme catalyses tRNA(Asx) + L-aspartate + ATP = L-aspartyl-tRNA(Asx) + AMP + diphosphate. Functionally, aspartyl-tRNA synthetase with relaxed tRNA specificity since it is able to aspartylate not only its cognate tRNA(Asp) but also tRNA(Asn). Reaction proceeds in two steps: L-aspartate is first activated by ATP to form Asp-AMP and then transferred to the acceptor end of tRNA(Asp/Asn). This chain is Aspartate--tRNA(Asp/Asn) ligase, found in Halothermothrix orenii (strain H 168 / OCM 544 / DSM 9562).